An 842-amino-acid chain; its full sequence is Glucans biosynthesis glucosyltransferase H (842 aa).

The next 7 helical transmembrane spans lie at 140-160 (ILLL…KTIL), 194-214 (ILIL…TALM), 513-533 (VFLT…FLAL), 570-590 (LFAS…MLIW), 615-635 (VLLA…AFLG), 656-676 (FMRH…MAWL), and 680-700 (FLFW…VSVV).

The protein belongs to the glycosyltransferase 2 family. OpgH subfamily.

Its subcellular location is the cell inner membrane. It functions in the pathway glycan metabolism; osmoregulated periplasmic glucan (OPG) biosynthesis. Involved in the biosynthesis of osmoregulated periplasmic glucans (OPGs). The protein is Glucans biosynthesis glucosyltransferase H of Citrobacter koseri (strain ATCC BAA-895 / CDC 4225-83 / SGSC4696).